Here is a 311-residue protein sequence, read N- to C-terminus: tRNA dimethylallyltransferase (311 aa).

ATP is bound at residue 9-16 (GPTAVGKT). Residue 11–16 (TAVGKT) coordinates substrate. The tract at residues 34 to 37 (DSMQ) is interaction with substrate tRNA.

Belongs to the IPP transferase family. In terms of assembly, monomer. It depends on Mg(2+) as a cofactor.

It catalyses the reaction adenosine(37) in tRNA + dimethylallyl diphosphate = N(6)-dimethylallyladenosine(37) in tRNA + diphosphate. Its function is as follows. Catalyzes the transfer of a dimethylallyl group onto the adenine at position 37 in tRNAs that read codons beginning with uridine, leading to the formation of N6-(dimethylallyl)adenosine (i(6)A). The chain is tRNA dimethylallyltransferase from Clostridium botulinum (strain Okra / Type B1).